We begin with the raw amino-acid sequence, 891 residues long: Transportin-1 (891 aa).

19 HEAT repeats span residues 14 to 40 (GLRE…QQLQ), 45 to 83 (FPDF…ATFS), 92 to 125 (YVKS…IVRV), 131 to 168 (LFQA…LDVD), 178 to 208 (NVFM…QYIV), 221 to 248 (YLQG…VQLI), 260 to 287 (KNVT…FWSA), 303 to 381 (PRLI…LSNV), 389 to 420 (TLMP…GAIA), 432 to 459 (PQIV…TLSR), 477 to 510 (FDKI…EEEA), 518 to 551 (LGII…ADAV), 559 to 597 (KYLD…QALG), 605 to 653 (EPVF…GLGA), 664 to 695 (LRDI…RVCP), 703 to 740 (QEFL…IKIG), 748 to 784 (ITVV…WVCP), 792 to 825 (DHFM…VAAN), and 834 to 866 (TFIC…KQML). Residues 35–103 (IWQQLQHYSQ…KSELLPCIGA (69 aa)) form the Importin N-terminal domain. The span at 317–330 (DDDESLADAEEDES) shows a compositional bias: acidic residues. Positions 317–337 (DDDESLADAEEDESFPDRDQD) are disordered.

This sequence belongs to the importin beta family. Importin beta-2 subfamily.

It is found in the cytoplasm. Its subcellular location is the nucleus. The protein localises to the nucleoplasm. Functionally, functions in nuclear protein import as nuclear transport receptor. Serves as receptor for nuclear localization signals (NLS) in cargo substrates. Is thought to mediate docking of the importin/substrate complex to the nuclear pore complex (NPC) through binding to nucleoporin and the complex is subsequently translocated through the pore by an energy requiring, Ran-dependent mechanism. At the nucleoplasmic side of the NPC, Ran binds to the importin, the importin/substrate complex dissociates and importin is re-exported from the nucleus to the cytoplasm where GTP hydrolysis releases Ran. The directionality of nuclear import is thought to be conferred by an asymmetric distribution of the GTP- and GDP-bound forms of Ran between the cytoplasm and nucleus. The protein is Transportin-1 (TRN1) of Oryza sativa subsp. japonica (Rice).